The sequence spans 423 residues: UDP-N-acetylglucosamine 1-carboxyvinyltransferase (423 aa).

22–23 (KN) is a binding site for phosphoenolpyruvate. Arg-93 lines the UDP-N-acetyl-alpha-D-glucosamine pocket. The Proton donor role is filled by Cys-117. Cys-117 is subject to 2-(S-cysteinyl)pyruvic acid O-phosphothioketal. UDP-N-acetyl-alpha-D-glucosamine-binding positions include 122–126 (RPIDL), Asp-307, and Val-329.

This sequence belongs to the EPSP synthase family. MurA subfamily.

The protein localises to the cytoplasm. The enzyme catalyses phosphoenolpyruvate + UDP-N-acetyl-alpha-D-glucosamine = UDP-N-acetyl-3-O-(1-carboxyvinyl)-alpha-D-glucosamine + phosphate. The protein operates within cell wall biogenesis; peptidoglycan biosynthesis. Its function is as follows. Cell wall formation. Adds enolpyruvyl to UDP-N-acetylglucosamine. The protein is UDP-N-acetylglucosamine 1-carboxyvinyltransferase of Chlorobium chlorochromatii (strain CaD3).